Consider the following 308-residue polypeptide: Aspartate carbamoyltransferase catalytic subunit (308 aa).

Residues R58 and T59 each contribute to the carbamoyl phosphate site. K86 is an L-aspartate binding site. Residues R108, H136, and Q139 each contribute to the carbamoyl phosphate site. L-aspartate contacts are provided by R169 and R227. Residues G268 and P269 each coordinate carbamoyl phosphate.

It belongs to the aspartate/ornithine carbamoyltransferase superfamily. ATCase family. Heterododecamer (2C3:3R2) of six catalytic PyrB chains organized as two trimers (C3), and six regulatory PyrI chains organized as three dimers (R2).

The enzyme catalyses carbamoyl phosphate + L-aspartate = N-carbamoyl-L-aspartate + phosphate + H(+). It functions in the pathway pyrimidine metabolism; UMP biosynthesis via de novo pathway; (S)-dihydroorotate from bicarbonate: step 2/3. Catalyzes the condensation of carbamoyl phosphate and aspartate to form carbamoyl aspartate and inorganic phosphate, the committed step in the de novo pyrimidine nucleotide biosynthesis pathway. In Chloroflexus aggregans (strain MD-66 / DSM 9485), this protein is Aspartate carbamoyltransferase catalytic subunit.